The chain runs to 389 residues: Acetate kinase (389 aa).

Asn7 lines the Mg(2+) pocket. Lys14 provides a ligand contact to ATP. Arg88 contacts substrate. Residue Asp145 is the Proton donor/acceptor of the active site. ATP contacts are provided by residues 205–209 (HLGNG), 279–281 (DLR), and 324–328 (GIGEN). Mg(2+) is bound at residue Glu375.

The protein belongs to the acetokinase family. As to quaternary structure, homodimer. The cofactor is Mg(2+). Mn(2+) serves as cofactor.

The protein resides in the cytoplasm. It catalyses the reaction acetate + ATP = acetyl phosphate + ADP. The protein operates within metabolic intermediate biosynthesis; acetyl-CoA biosynthesis; acetyl-CoA from acetate: step 1/2. Its function is as follows. Catalyzes the formation of acetyl phosphate from acetate and ATP. Can also catalyze the reverse reaction. The chain is Acetate kinase from Sulfurimonas denitrificans (strain ATCC 33889 / DSM 1251) (Thiomicrospira denitrificans (strain ATCC 33889 / DSM 1251)).